A 365-amino-acid chain; its full sequence is DNA replication and repair protein RecF (365 aa).

30–37 (GLNAQGKT) is an ATP binding site.

The protein belongs to the RecF family.

The protein localises to the cytoplasm. Its function is as follows. The RecF protein is involved in DNA metabolism; it is required for DNA replication and normal SOS inducibility. RecF binds preferentially to single-stranded, linear DNA. It also seems to bind ATP. The chain is DNA replication and repair protein RecF from Chlamydia trachomatis serovar L2b (strain UCH-1/proctitis).